A 152-amino-acid chain; its full sequence is UPF0336 protein Tfu_2666 (152 aa).

The 110-residue stretch at 7–116 (YLGRAYELPE…TTITDIKSLA (110 aa)) folds into the MaoC-like domain.

The protein belongs to the UPF0336 family.

In Thermobifida fusca (strain YX), this protein is UPF0336 protein Tfu_2666.